Reading from the N-terminus, the 141-residue chain is Large ribosomal subunit protein uL11B/uL11C (141 aa).

The protein belongs to the universal ribosomal protein uL11 family. Part of the ribosomal stalk of the 50S ribosomal subunit. Interacts with L10 and the large rRNA to form the base of the stalk. L10 forms an elongated spine to which L12 dimers bind in a sequential fashion forming a multimeric L10(L12)X complex. One or more lysine residues are methylated.

Functionally, forms part of the ribosomal stalk which helps the ribosome interact with GTP-bound translation factors. This chain is Large ribosomal subunit protein uL11B/uL11C, found in Bacillus cereus (strain ATCC 14579 / DSM 31 / CCUG 7414 / JCM 2152 / NBRC 15305 / NCIMB 9373 / NCTC 2599 / NRRL B-3711).